We begin with the raw amino-acid sequence, 1328 residues long: WASH complex subunit 2 (1328 aa).

The tract at residues 1 to 219 is sufficient for interaction with WASHC3, WASHC4 and WASHC5; required for interaction with WASHC1; sequence MNRTSPDSEQ…VGSDRGSIVD (219 aa). 5 positions are modified to phosphoserine: Ser-157, Ser-159, Ser-204, Ser-205, and Ser-209. Low complexity predominate over residues 201–213; that stretch reads GELSSEEGSVGSD. 2 disordered regions span residues 201–655 and 675–830; these read GELS…KTNL and KKTQ…PKST. Acidic residues-rich tracts occupy residues 219–231 and 248–273; these read DSED…ESDD and SDEE…EDIE. Position 283 is a phosphoserine (Ser-283). Positions 288–323 are enriched in basic and acidic residues; the sequence is LAARIKGDVSNQRKEGHTDGKPQRTVKEKKERRTPA. Residue Thr-321 is modified to Phosphothreonine. Positions 346–592 are sufficient for interaction with CCDC93; the sequence is SRGGLFSDRQ…QTSSLPPQSQ (247 aa). Residues 347–1328 form an interaction with VPS35 region; the sequence is RGGLFSDRQG…DDPLNAFGSQ (982 aa). An LFa 1 motif is present at residues 357–367; sequence LFDDDDESDLF. 2 positions are modified to phosphoserine: Ser-384 and Ser-387. 2 short sequence motifs (LFa) span residues 440-455 and 474-483; these read LFDD…DNFF and IFDDDEGDLF. Residues 441 to 453 are compositionally biased toward acidic residues; the sequence is FDDDDNDSDEDDN. Residues 508–528 are compositionally biased toward polar residues; it reads TITLPSSKNPKLVSETKTQKG. Short sequence motifs (LFa) lie at residues 529–540 and 564–575; these read LFSDEEDSEDLF and LFGDEDEEDNLF. Phosphoserine occurs at positions 531 and 536. The segment covering 539–556 has biased composition (low complexity); sequence LFSSQSSSKTKSASVLSS. A compositionally biased stretch (polar residues) spans 582–592; the sequence is KQTSSLPPQSQ. Ser-610 and Ser-611 each carry phosphoserine. The segment covering 627–638 has biased composition (basic and acidic residues); sequence ASERKSKGERWD. 2 consecutive short sequence motifs (LFa) follow at residues 655 to 667 and 683 to 695; these read LFEE…VDLF and LFED…SSLF. The segment covering 690–699 has biased composition (polar residues); it reads SGSSLFSLPP. Phosphoserine is present on residues Ser-720, Ser-744, Ser-749, Ser-780, and Ser-795. Positions 797 to 808 are enriched in acidic residues; sequence FDEDEDKVEDDS. 2 consecutive short sequence motifs (LFa) follow at residues 832 to 840 and 849 to 855; these read VFQDEELLF and DPDVDLF. 2 disordered regions span residues 863–940 and 991–1088; these read LSMP…EPSS and PTLP…AMAV. Phosphoserine occurs at positions 867 and 870. The short motif at 871–881 is the LFa 10 element; that stretch reads LFGDDDDDDLF. Residues 894–919 are compositionally biased toward basic and acidic residues; sequence PEKKGTLRKDHKPPELTEGSKEKSTW. Residues 925–1328 are interaction with phospholipids; it reads QDSSGLTPFK…DDPLNAFGSQ (404 aa). The segment covering 1016 to 1034 has biased composition (basic residues); it reads NKGRVKVRGKRRPQTRAAR. Positions 1017–1035 are required for interaction with F-actin-capping protein subunit alpha (CAPZA1 or CAPZA2 or CAPZA3); sequence KGRVKVRGKRRPQTRAARR. Phosphoserine is present on residues Ser-1042, Ser-1060, Ser-1077, and Ser-1102. The segment at 1115–1210 is disordered; that stretch reads AHLFDSGDIF…KKNQWKSDSH (96 aa). Short sequence motifs (LFa) lie at residues 1117 to 1124, 1157 to 1171, and 1187 to 1195; these read LFDSGDIF, VFPD…DDLF, and LLEDEEDLF. 2 positions are modified to phosphoserine: Ser-1162 and Ser-1165. Residues 1196–1210 show a composition bias toward basic and acidic residues; sequence ADQKGKKNQWKSDSH. 3 consecutive short sequence motifs (LFa) follow at residues 1220 to 1226, 1249 to 1257, and 1277 to 1286; these read IFEDDIF, LFDDNIDIF, and MFDDDTDDIF. Residues 1289 to 1310 form a disordered region; the sequence is GLQAKASKPKSQSAEAVSELRS. Positions 1317 to 1325 match the LFa 17 motif; sequence IFDDPLNAF. Phosphoserine is present on Ser-1327.

This sequence belongs to the FAM21 family. In terms of assembly, component of the WASH core complex also described as WASH regulatory complex (SHRC) composed of WASHC1, WASHC2, WASHC3, WASHC4 and WASHC5; in the complex interacts (via N-terminus) directly with WASHC1. The WASH core complex associates with the F-actin-capping protein dimer (formed by CAPZA1, CAPZA2 or CAPZA3 and CAPZB) in a transient or substoichiometric manner which was initially described as WASH complex. Interacts with VPS35; mediates the association with the retromer CSC complex. Interacts with FKBP15. Interacts with CCDC93, CCDC22, VPS35L; indicative for an association of the WASH core complex with the CCC and retriever complexes. Directly interacts with TBC1D23.

Its subcellular location is the early endosome membrane. The protein localises to the cell membrane. Functionally, acts as a component of the WASH core complex that functions as a nucleation-promoting factor (NPF) at the surface of endosomes, where it recruits and activates the Arp2/3 complex to induce actin polymerization, playing a key role in the fission of tubules that serve as transport intermediates during endosome sorting. Mediates the recruitment of the WASH core complex to endosome membranes via binding to phospholipids and VPS35 of the retromer CSC. Mediates the recruitment of the F-actin-capping protein dimer to the WASH core complex probably promoting localized F-actin polymerization needed for vesicle scission. Via its C-terminus binds various phospholipids, most strongly phosphatidylinositol 4-phosphate (PtdIns-(4)P), phosphatidylinositol 5-phosphate (PtdIns-(5)P) and phosphatidylinositol 3,5-bisphosphate (PtdIns-(3,5)P2). Involved in the endosome-to-plasma membrane trafficking and recycling of SNX27-retromer-dependent cargo proteins, such as GLUT1. Required for the association of DNAJC13, ENTR1, ANKRD50 with retromer CSC subunit VPS35. Required for the endosomal recruitment of CCC and retriever complexes subunits COMMD1 and CCDC93 as well as the retrievere complex subunit VPS35L. The polypeptide is WASH complex subunit 2 (Rattus norvegicus (Rat)).